Here is a 162-residue protein sequence, read N- to C-terminus: Interleukin-15 (162 aa).

An N-terminal signal peptide occupies residues 1 to 29 (MRISKPSLRSTSIQCYLCFLLNSHLITEA). The propeptide occupies 30–48 (GIHVFVWGCISAGLPKTEA). Disulfide bonds link C83–C133 and C90–C136. N-linked (GlcNAc...) asparagine glycans are attached at residues N119 and N127.

The protein belongs to the IL-15/IL-21 family.

It localises to the secreted. Functionally, cytokine that plays a major role in the development of inflammatory and protective immune responses to microbial invaders and parasites by modulating immune cells of both the innate and adaptive immune systems. Stimulates the proliferation of natural killer cells, T-cells and B-cells and promotes the secretion of several cytokines. In monocytes, induces the production of IL8 and monocyte chemotactic protein 1/CCL2, two chemokines that attract neutrophils and monocytes respectively to sites of infection. Unlike most cytokines, which are secreted in soluble form, IL15 is expressed in association with its high affinity IL15RA on the surface of IL15-producing cells and delivers signals to target cells that express IL2RB and IL2RG receptor subunits. Binding to its receptor triggers the phosphorylation of JAK1 and JAK3 and the recruitment and subsequent phosphorylation of signal transducer and activator of transcription-3/STAT3 and STAT5. In mast cells, induces the rapid tyrosine phosphorylation of STAT6 and thereby controls mast cell survival and release of cytokines such as IL4. In Cavia porcellus (Guinea pig), this protein is Interleukin-15 (IL15).